Reading from the N-terminus, the 384-residue chain is Ribonucleoside-diphosphate reductase small chain (384 aa).

3 residues coordinate Fe cation: D130, E161, and H164. Y168 is an active-site residue. Positions 224, 258, and 261 each coordinate Fe cation.

This sequence belongs to the ribonucleoside diphosphate reductase small chain family. In terms of assembly, heterodimer of a large and a small subunit. It depends on Fe cation as a cofactor.

The enzyme catalyses a 2'-deoxyribonucleoside 5'-diphosphate + [thioredoxin]-disulfide + H2O = a ribonucleoside 5'-diphosphate + [thioredoxin]-dithiol. Provides the precursors necessary for DNA synthesis. Catalyzes the biosynthesis of deoxyribonucleotides from the corresponding ribonucleotides. The protein is Ribonucleoside-diphosphate reductase small chain of Spisula solidissima (Atlantic surf-clam).